A 460-amino-acid chain; its full sequence is Phosphoglucomutase (460 aa).

The active-site Phosphoserine intermediate is the Ser103. Ser103 is a Mg(2+) binding site. Substrate contacts are provided by residues 103–104 (SH) and Lys113. Residues Asp239, Asp241, and Asp243 each contribute to the Mg(2+) site. Residues 243–244 (DR), Thr303, and 322–324 (EMS) contribute to the substrate site.

The protein belongs to the phosphohexose mutase family. Mg(2+) is required as a cofactor.

The protein resides in the cytoplasm. It carries out the reaction alpha-D-glucose 1-phosphate = alpha-D-glucose 6-phosphate. Its function is as follows. This enzyme participates in both the breakdown and synthesis of glucose. The polypeptide is Phosphoglucomutase (pgm) (Neisseria meningitidis serogroup A / serotype 4A (strain DSM 15465 / Z2491)).